A 430-amino-acid chain; its full sequence is Adenylosuccinate synthetase (430 aa).

GTP-binding positions include 12–18 (GDEGKGK) and 40–42 (GHT). Residue D13 is the Proton acceptor of the active site. Residues D13 and G40 each coordinate Mg(2+). IMP is bound by residues 13–16 (DEGK), 38–41 (NAGH), T130, R144, Q224, T239, and R303. H41 (proton donor) is an active-site residue. Position 299 to 305 (299 to 305 (VNTGRKR)) interacts with substrate. GTP contacts are provided by residues R305, 331–333 (KLD), and 413–415 (STS).

It belongs to the adenylosuccinate synthetase family. Homodimer. It depends on Mg(2+) as a cofactor.

The protein resides in the cytoplasm. The catalysed reaction is IMP + L-aspartate + GTP = N(6)-(1,2-dicarboxyethyl)-AMP + GDP + phosphate + 2 H(+). It participates in purine metabolism; AMP biosynthesis via de novo pathway; AMP from IMP: step 1/2. Functionally, plays an important role in the de novo pathway of purine nucleotide biosynthesis. Catalyzes the first committed step in the biosynthesis of AMP from IMP. This chain is Adenylosuccinate synthetase, found in Rhodopseudomonas palustris (strain BisA53).